A 438-amino-acid polypeptide reads, in one-letter code: Carboxypeptidase A6 (438 aa).

The first 30 residues, M1 to C30, serve as a signal peptide directing secretion. The propeptide at H31–R129 is activation peptide. N-linked (GlcNAc...) asparagine glycosylation is found at N89 and N153. One can recognise a Peptidase M14 domain in the interval V138 to L433. Zn(2+) is bound by residues H197 and E200. Substrate contacts are provided by residues H197–E200, R255, and N272–R273. Cysteines 266 and 289 form a disulfide. H325 serves as a coordination point for Zn(2+). A326–Y327 is a binding site for substrate. N-linked (GlcNAc...) asparagine glycosylation occurs at N344. Y377 contributes to the substrate binding site. The Proton donor/acceptor role is filled by E399. N428 carries N-linked (GlcNAc...) asparagine glycosylation.

This sequence belongs to the peptidase M14 family. It depends on Zn(2+) as a cofactor. In brain, highly expressed in the olfactory bulb with lower levels in other regions including cerebral cortex, hippocampus, hypothalamus, striatum and medulla. Within the olfactory bulb, highest levels occur in the mitral and granular layers with lower levels in the internal and external plexiform layers. Moderate levels are found in the epididymis with low levels in colon and spleen. Not detected in adrenal, liver, lung, ovary or testis. At embryonic day 14.5, enriched in eye, ear, osteoblasts, stomach, skin, dorsal root ganglia and throughout the CNS.

It is found in the secreted. It localises to the extracellular space. The protein localises to the extracellular matrix. Its function is as follows. May be involved in the proteolytic inactivation of enkephalins and neurotensin in some brain areas. May convert inactive angiotensin I into the biologically active angiotensin II. Releases a C-terminal amino acid, with preference for large hydrophobic C-terminal amino acids and shows only very weak activity toward small amino acids and histidine. This Mus musculus (Mouse) protein is Carboxypeptidase A6 (Cpa6).